Here is a 483-residue protein sequence, read N- to C-terminus: BTB/POZ domain and ankyrin repeat-containing protein NBCL (483 aa).

The region spanning 25 to 109 (SDVTFSVEGR…LYSGQVSIVP (85 aa)) is the BTB domain. The C2HC NPR-type zinc-finger motif lies at 115-129 (RPNCGERACWHTHCT). The Zn(2+) site is built by cysteine 118, cysteine 123, histidine 125, and cysteine 128. ANK repeat units lie at residues 254-283 (QKIR…LNLD), 284-313 (EALA…DVNY), 318-347 (SGKT…DPNV), and 351-385 (DGVT…KLRL). Residues 401-437 (EGNANANSSNNNNAPCSAATPIYPPMNEDHNSSSSNA) form a disordered region. Residues 403–419 (NANANSSNNNNAPCSAA) show a composition bias toward low complexity.

It belongs to the plant 'ANKYRIN-BTB/POZ' family. 'NOOT-BOP-COCH-like' (NBCL) subfamily. In terms of assembly, homodimer. Interacts with APP1 around the plasma membrane and in the nucleus; this interaction disturbs APP1-mediated regulation of the nuclear transcription factor Y subunit (NF-YA1). In terms of tissue distribution, mainly expressed in root nodules, to a lesser extent in shoot apical meristems (SAM) and root meristems (RM), and barely in leaves, non-nodulating roots and root apical meristems (RAM).

The protein localises to the nucleus. Its subcellular location is the cytoplasm. It localises to the cell membrane. It participates in protein modification; protein ubiquitination. May act as a substrate-specific adapter of an E3 ubiquitin-protein ligase complex (CUL3-RBX1-BTB) which mediates the ubiquitination and subsequent proteasomal degradation of target proteins. Transcriptional co-regulator involved in the promotion of leaf and floral meristem fate and determinacy. Required for the abscission of senescent organs, probably by regulating the cell wall disorganization in abscission zones (AZs, e.g. pulvini at the base of leaves). Involved in the coordination of the symbiotic nodule developmental program; promotes the formation of root nodules by interacting directly with APP1 to modulate the expression of the nuclear transcription factor Y subunit (NF-YA1), a key nodulin. Necessary for the robust maintenance of nodule identity throughout the nodule developmental program. In Lotus japonicus (Lotus corniculatus var. japonicus), this protein is BTB/POZ domain and ankyrin repeat-containing protein NBCL.